Consider the following 250-residue polypeptide: Putative beta-carotene-binding protein (250 aa).

Deposited in the epidermis and cuticle of male locusts during their sexual maturation.

Functionally, has beta-carotene-binding activity. May be involved in the transport of carotenes from internal tissues to epidermis and cuticle of the locust. In Schistocerca gregaria (Desert locust), this protein is Putative beta-carotene-binding protein.